A 282-amino-acid polypeptide reads, in one-letter code: Bifunctional protein FolD 1 (282 aa).

NADP(+) contacts are provided by residues 167-169 and S192; that span reads GRS.

Belongs to the tetrahydrofolate dehydrogenase/cyclohydrolase family. As to quaternary structure, homodimer.

It carries out the reaction (6R)-5,10-methylene-5,6,7,8-tetrahydrofolate + NADP(+) = (6R)-5,10-methenyltetrahydrofolate + NADPH. The enzyme catalyses (6R)-5,10-methenyltetrahydrofolate + H2O = (6R)-10-formyltetrahydrofolate + H(+). The protein operates within one-carbon metabolism; tetrahydrofolate interconversion. In terms of biological role, catalyzes the oxidation of 5,10-methylenetetrahydrofolate to 5,10-methenyltetrahydrofolate and then the hydrolysis of 5,10-methenyltetrahydrofolate to 10-formyltetrahydrofolate. The sequence is that of Bifunctional protein FolD 1 from Colwellia psychrerythraea (strain 34H / ATCC BAA-681) (Vibrio psychroerythus).